A 164-amino-acid chain; its full sequence is Peptidyl-prolyl cis-trans isomerase CYP18-2 (164 aa).

Residues 12-162 form the PPIase cyclophilin-type domain; it reads VTLETSMGPF…HEVKILRTKV (151 aa).

The protein belongs to the cyclophilin-type PPIase family. Ubiquitous.

It localises to the cytoplasm. The enzyme catalyses [protein]-peptidylproline (omega=180) = [protein]-peptidylproline (omega=0). In terms of biological role, PPIases accelerate the folding of proteins. It catalyzes the cis-trans isomerization of proline imidic peptide bonds in oligopeptides. The chain is Peptidyl-prolyl cis-trans isomerase CYP18-2 (CYP18-2) from Arabidopsis thaliana (Mouse-ear cress).